The chain runs to 205 residues: Dephospho-CoA kinase (205 aa).

The DPCK domain maps to 4 to 203 (KIGITGGIGS…QKIHYLCSAK (200 aa)). Residue 12–17 (GSGKSV) participates in ATP binding.

The protein belongs to the CoaE family.

Its subcellular location is the cytoplasm. It carries out the reaction 3'-dephospho-CoA + ATP = ADP + CoA + H(+). It functions in the pathway cofactor biosynthesis; coenzyme A biosynthesis; CoA from (R)-pantothenate: step 5/5. In terms of biological role, catalyzes the phosphorylation of the 3'-hydroxyl group of dephosphocoenzyme A to form coenzyme A. The chain is Dephospho-CoA kinase from Bacteroides fragilis (strain ATCC 25285 / DSM 2151 / CCUG 4856 / JCM 11019 / LMG 10263 / NCTC 9343 / Onslow / VPI 2553 / EN-2).